The chain runs to 1035 residues: Cell-division control histidine kinase PdhS (1035 aa).

Positions 1 to 613 (MSGSYPFIDI…HADGSEEPVD (613 aa)) are important for polar localization. Positions 500–533 (QGLANTRAESETPVSETSSIEPVEPTPPVKTRSE) are disordered. The interaction with DivK stretch occupies residues 614–1035 (AHLNAIAWRG…VFPPTRVLAD (422 aa)). A PAS domain is found at 659–730 (HVEELKTILD…YLHGLSGNGV (72 aa)). One can recognise a Histidine kinase domain in the interval 802 to 1031 (RISHEIRTPL…VVEIVFPPTR (230 aa)). Phosphohistidine; by autocatalysis is present on histidine 805.

Interacts with DivK.

It localises to the cytoplasm. The catalysed reaction is ATP + protein L-histidine = ADP + protein N-phospho-L-histidine.. In terms of biological role, functions as a polar differentiation marker. Essential protein that, by localizing in the old pole of dividing cells, controls cell division and maturation, probably through control of DivK phosphorylation status and cellular distribution, which in turn regulates CtrA, a transcriptional regulator of the minB operon. The asymmetrical localization of this protein is probably required for cells to enter a new division cycle. This Brucella suis biovar 1 (strain 1330) protein is Cell-division control histidine kinase PdhS (pdhS).